Reading from the N-terminus, the 149-residue chain is 3-dehydroquinate dehydratase (149 aa).

Y21 (proton acceptor) is an active-site residue. Substrate contacts are provided by N73, H79, and D86. The Proton donor role is filled by H99. Substrate-binding positions include 100–101 and R110; that span reads LT.

This sequence belongs to the type-II 3-dehydroquinase family. As to quaternary structure, homododecamer.

It catalyses the reaction 3-dehydroquinate = 3-dehydroshikimate + H2O. Its pathway is metabolic intermediate biosynthesis; chorismate biosynthesis; chorismate from D-erythrose 4-phosphate and phosphoenolpyruvate: step 3/7. In terms of biological role, catalyzes a trans-dehydration via an enolate intermediate. The sequence is that of 3-dehydroquinate dehydratase from Thermus thermophilus (strain ATCC BAA-163 / DSM 7039 / HB27).